A 182-amino-acid chain; its full sequence is ATP synthase subunit b, chloroplastic (182 aa).

Residues 33 to 55 (VLNIMLLLFGLIYVLKQFLGSLL) traverse the membrane as a helical segment.

Belongs to the ATPase B chain family. In terms of assembly, F-type ATPases have 2 components, F(1) - the catalytic core - and F(0) - the membrane proton channel. F(1) has five subunits: alpha(3), beta(3), gamma(1), delta(1), epsilon(1). F(0) has four main subunits: a(1), b(1), b'(1) and c(10-14). The alpha and beta chains form an alternating ring which encloses part of the gamma chain. F(1) is attached to F(0) by a central stalk formed by the gamma and epsilon chains, while a peripheral stalk is formed by the delta, b and b' chains.

The protein resides in the plastid. It localises to the chloroplast thylakoid membrane. Its function is as follows. F(1)F(0) ATP synthase produces ATP from ADP in the presence of a proton or sodium gradient. F-type ATPases consist of two structural domains, F(1) containing the extramembraneous catalytic core and F(0) containing the membrane proton channel, linked together by a central stalk and a peripheral stalk. During catalysis, ATP synthesis in the catalytic domain of F(1) is coupled via a rotary mechanism of the central stalk subunits to proton translocation. In terms of biological role, component of the F(0) channel, it forms part of the peripheral stalk, linking F(1) to F(0). This chain is ATP synthase subunit b, chloroplastic, found in Antithamnion sp. (Red alga).